The following is a 396-amino-acid chain: Putative cystathionine beta-lyase (396 aa).

Position 210 is an N6-(pyridoxal phosphate)lysine (lysine 210).

The protein belongs to the trans-sulfuration enzymes family. Pyridoxal 5'-phosphate is required as a cofactor.

The catalysed reaction is L,L-cystathionine + H2O = L-homocysteine + pyruvate + NH4(+). The enzyme catalyses an S-substituted L-cysteine + H2O = a thiol + pyruvate + NH4(+). It participates in amino-acid biosynthesis; L-methionine biosynthesis via de novo pathway; L-homocysteine from L-cystathionine: step 1/1. Functionally, catalyzes the cleavage of cystathionine to homocysteine, pyruvate and ammonia during methionine biosynthesis. The chain is Putative cystathionine beta-lyase (metC) from Rhizobium johnstonii (strain DSM 114642 / LMG 32736 / 3841) (Rhizobium leguminosarum bv. viciae).